Here is a 249-residue protein sequence, read N- to C-terminus: Low affinity immunoglobulin gamma Fc region receptor III-A (249 aa).

Residues 1–16 (MWQLLPSTALLLVASA) form the signal peptide. The Extracellular segment spans residues 17–198 (RPQAADLPKA…IQGPPVPSTS (182 aa)). Ig-like C2-type domains lie at 24–104 (PKAV…LEVH) and 119–172 (EGEP…YFCR). 2 cysteine pairs are disulfide-bonded: cysteine 47–cysteine 88 and cysteine 127–cysteine 171. N-linked (GlcNAc...) asparagine glycans are attached at residues asparagine 55, asparagine 63, asparagine 166, and asparagine 179. A helical transmembrane segment spans residues 199–219 (ALLPFWPHIPFAVVMALLFAV). The Cytoplasmic portion of the chain corresponds to 220–249 (DTGLYFAMQRHLHNSKRAWENSKVSWKQDP).

As to quaternary structure, forms a heterooligomeric complex with ITAM-containing signaling subunits FCER1G. Interacts (via transmembrane domain) with signaling subunits; this interaction is a prerequisite for receptor complex expression on the cell surface and intracellular signal transduction. Binds the Fc region of antigen-complexed IgG.

The protein localises to the cell membrane. Receptor for the invariable Fc fragment of immunoglobulin gamma (IgG). Optimally activated upon binding of clustered antigen-IgG complexes displayed on cell surfaces, triggers lysis of antibody-coated cells, a process known as antibody-dependent cellular cytotoxicity (ADCC). Does not bind free monomeric IgG, thus avoiding inappropriate effector cell activation in the absence of antigenic trigger. Mediates IgG effector functions on natural killer (NK) cells. Binds antigen-IgG complexes generated upon infection and triggers NK cell-dependent cytokine production and degranulation to limit viral load and propagation. Fc-binding subunit that associates with FCER1G adapter to form functional signaling complexes. Following the engagement of antigen-IgG complexes, triggers phosphorylation of immunoreceptor tyrosine-based activation motif (ITAM)-containing adapter with subsequent activation of phosphatidylinositol 3-kinase signaling and sustained elevation of intracellular calcium that ultimately drive NK cell activation. Mediates enhanced ADCC in response to afucosylated IgGs. The protein is Low affinity immunoglobulin gamma Fc region receptor III-A of Mustela putorius furo (European domestic ferret).